We begin with the raw amino-acid sequence, 214 residues long: NKG2-D type II integral membrane protein (214 aa).

Residues 1-56 (MGWIRDRRSPSSMEIRELHNRDVINRGAFKSRQKRTQTLITSKCGENPSPFFLARS) lie on the Cytoplasmic side of the membrane. A helical; Signal-anchor for type II membrane protein membrane pass occupies residues 57-77 (IAIAMGIRFIVMVMIYSGMII). Topologically, residues 78–214 (NLLFNQEAPS…NTYICMKRTV (137 aa)) are extracellular. Disulfide bonds link cysteine 94–cysteine 103 and cysteine 97–cysteine 108. The region spanning 98 to 210 (PKNWICYRNS…CLTLNTYICM (113 aa)) is the C-type lectin domain. Residues asparagine 113, asparagine 129, asparagine 161, and asparagine 184 are each glycosylated (N-linked (GlcNAc...) asparagine). Disulfide bonds link cysteine 125-cysteine 209 and cysteine 187-cysteine 201.

As to quaternary structure, homodimer; disulfide-linked. Heterohexamer composed of two subunits of KLRK1 and four subunits of HCST/DAP10. Interacts (via transmembrane domain) with HCST/DAP10 (via transmembrane domain); the interaction is required for KLRK1 NK cell surface and induces NK cell-mediated cytotoxicity. Can form disulfide-bonded heterodimer with CD94. Interacts with CEACAM1; recruits PTPN6 that dephosphorylates VAV1. Detected in peripheral blood leukocytes, macrophages, monocytes and natural killer cells.

The protein resides in the cell membrane. Its function is as follows. Functions as an activating and costimulatory receptor involved in immunosurveillance upon binding to various cellular stress-inducible ligands displayed at the surface of autologous tumor cells and virus-infected cells. Provides both stimulatory and costimulatory innate immune responses on activated killer (NK) cells, leading to cytotoxic activity. Acts as a costimulatory receptor for T-cell receptor (TCR) in CD8(+) T-cell-mediated adaptive immune responses by amplifying T-cell activation. Stimulates perforin-mediated elimination of ligand-expressing tumor cells. Signaling involves calcium influx, culminating in the expression of TNF-alpha. Participates in NK cell-mediated bone marrow graft rejection. May play a regulatory role in differentiation and survival of NK cells. Binds to ligands belonging to various subfamilies of MHC class I-related glycoproteins. This is NKG2-D type II integral membrane protein (KLRK1) from Sus scrofa (Pig).